The chain runs to 1363 residues: Insulin-like peptide receptor (1363 aa).

An N-terminal signal peptide occupies residues 1–29 (MRVVDKMAGLMWAALTLVIGLGLLVPSNG). Residues Asn51, Asn97, Asn137, Asn278, Asn483, Asn599, Asn617, Asn665, Asn666, Asn711, Asn732, Asn736, Asn743, Asn816, Asn885, and Asn898 are each glycosylated (N-linked (GlcNAc...) asparagine). Fibronectin type-III domains follow at residues 473–586 (SFSR…TDAD) and 590–680 (HPQD…CPKS). 2 Fibronectin type-III domains span residues 712 to 804 (ETRA…LART) and 813 to 912 (IPGN…VEEE). The Extracellular portion of the chain corresponds to 721–928 (ELPVTARPFY…QDPQQQVPVS (208 aa)). A disordered region spans residues 739–759 (LPSTNRTVPPTPTPNPNPQLE). Residues 929-949 (LMIGMGVGFSLLLILAVIFGI) traverse the membrane as a helical segment. At 950-1363 (WYCTKKRFGD…NLRIPKSTLC (414 aa)) the chain is on the cytoplasmic side. In terms of domain architecture, Protein kinase spans 994-1283 (ITLIRELGQG…EIVEILSPEL (290 aa)). ATP contacts are provided by residues 1000–1008 (LGQGSFGMV) and Lys1028. The tract at residues 1091–1117 (PEEDVGLSDSPASNEAKNSPFAENDND) is disordered. Asp1148 functions as the Proton acceptor in the catalytic mechanism. Residue Tyr1174 is modified to Phosphotyrosine; by autocatalysis. Positions 1316–1363 (DTETEMYPSGSEFSSTPSPPSETPYSHMNGSHPQNGSMNLRIPKSTLC) are disordered. Low complexity predominate over residues 1322–1331 (YPSGSEFSST). A compositionally biased stretch (polar residues) spans 1343–1353 (MNGSHPQNGSM).

It belongs to the protein kinase superfamily. Tyr protein kinase family. Insulin receptor subfamily. In terms of assembly, probable tetramer of 2 alpha and 2 beta chains linked by disulfide bonds. The alpha chains contribute to the formation of the ligand-binding domain, while the beta chains carry the kinase domain. Mn(2+) serves as cofactor.

The protein resides in the membrane. The enzyme catalyses L-tyrosyl-[protein] + ATP = O-phospho-L-tyrosyl-[protein] + ADP + H(+). Functionally, this receptor binds to the insulin related peptide and has a tyrosine-protein kinase activity. The protein is Insulin-like peptide receptor of Branchiostoma lanceolatum (Common lancelet).